Consider the following 426-residue polypeptide: Anaerobic glycerol-3-phosphate dehydrogenase subunit C (426 aa).

4Fe-4S ferredoxin-type domains follow at residues 21–53 (SYKY…LYPG) and 67–99 (KSAE…GDLI). [4Fe-4S] cluster contacts are provided by Cys32, Cys35, Cys38, Cys42, Cys79, Cys82, Cys85, and Cys89.

As to quaternary structure, composed of a catalytic GlpA/B dimer and of GlpC.

Its subcellular location is the cell inner membrane. Its pathway is polyol metabolism; glycerol degradation via glycerol kinase pathway; glycerone phosphate from sn-glycerol 3-phosphate (anaerobic route): step 1/1. In terms of biological role, electron transfer protein; may also function as the membrane anchor for the GlpAB dimer. The protein is Anaerobic glycerol-3-phosphate dehydrogenase subunit C (glpC) of Haemophilus influenzae (strain ATCC 51907 / DSM 11121 / KW20 / Rd).